A 416-amino-acid polypeptide reads, in one-letter code: Serine hydroxymethyltransferase (416 aa).

Residues Leu-119 and 123-125 (GHL) contribute to the (6S)-5,6,7,8-tetrahydrofolate site. Position 228 is an N6-(pyridoxal phosphate)lysine (Lys-228).

It belongs to the SHMT family. As to quaternary structure, homodimer. Pyridoxal 5'-phosphate serves as cofactor.

The protein localises to the cytoplasm. The enzyme catalyses (6R)-5,10-methylene-5,6,7,8-tetrahydrofolate + glycine + H2O = (6S)-5,6,7,8-tetrahydrofolate + L-serine. The protein operates within one-carbon metabolism; tetrahydrofolate interconversion. Its pathway is amino-acid biosynthesis; glycine biosynthesis; glycine from L-serine: step 1/1. Catalyzes the reversible interconversion of serine and glycine with tetrahydrofolate (THF) serving as the one-carbon carrier. This reaction serves as the major source of one-carbon groups required for the biosynthesis of purines, thymidylate, methionine, and other important biomolecules. Also exhibits THF-independent aldolase activity toward beta-hydroxyamino acids, producing glycine and aldehydes, via a retro-aldol mechanism. The chain is Serine hydroxymethyltransferase from Moorella thermoacetica (strain ATCC 39073 / JCM 9320).